The primary structure comprises 505 residues: NADH-quinone oxidoreductase subunit N (505 aa).

14 helical membrane-spanning segments follow: residues 20–40 (ALAPELVLLVTAVCLMLGDLF), 59–79 (ALALTLSMNFSGGATAFGGVF), 83–103 (GLAAAFKVVCLAALGLTALMS), 115–135 (GEYYSLMAFSTLGMCVMVSAG), 137–157 (AIVLYLGLELMALPIYALVAL), 172–192 (FLMGSFASALLLFGLSILYGL), 220–240 (AVVALGLVLAGLGFKVATVPF), 251–271 (APTTVTAFMSVAAKTASFAVL), 285–305 (LWSDALAGLAVLTMLLGNIAA), 314–334 (MLAYSAIAHAGYALLGLAACT), 342–362 (AAYLTIYLCMNIGAFAVIIYL), 394–414 (LAAVMLVFLFSLTGIPPTAGF), 431–451 (ITVVVAVVCSTISAWYYLGVA), and 481–501 (AVCLAGAVLWGIFPQSLLFWI).

The protein belongs to the complex I subunit 2 family. As to quaternary structure, NDH-1 is composed of 14 different subunits. Subunits NuoA, H, J, K, L, M, N constitute the membrane sector of the complex.

The protein resides in the cell inner membrane. The catalysed reaction is a quinone + NADH + 5 H(+)(in) = a quinol + NAD(+) + 4 H(+)(out). In terms of biological role, NDH-1 shuttles electrons from NADH, via FMN and iron-sulfur (Fe-S) centers, to quinones in the respiratory chain. The immediate electron acceptor for the enzyme in this species is believed to be ubiquinone. Couples the redox reaction to proton translocation (for every two electrons transferred, four hydrogen ions are translocated across the cytoplasmic membrane), and thus conserves the redox energy in a proton gradient. The sequence is that of NADH-quinone oxidoreductase subunit N from Desulfovibrio desulfuricans (strain ATCC 27774 / DSM 6949 / MB).